A 580-amino-acid polypeptide reads, in one-letter code: Long-chain-fatty-acid--AMP ligase FadD28 (580 aa).

The segment at 421–440 (SERTFGGKIVTPSPGTPEGP) is disordered.

It belongs to the ATP-dependent AMP-binding enzyme family.

It catalyses the reaction holo-[mycocerosate synthase] + a long-chain fatty acid + ATP = a long-chain fatty acyl-[mycocerosate synthase] + AMP + diphosphate. It carries out the reaction a long-chain fatty acid + ATP + H(+) = a long-chain fatty acyl-AMP + diphosphate. The catalysed reaction is holo-[mycocerosate synthase] + a long-chain fatty acyl-AMP = a long-chain fatty acyl-[mycocerosate synthase] + AMP + H(+). It functions in the pathway lipid metabolism; fatty acid biosynthesis. Its function is as follows. Involved in the biosynthesis of phthiocerol dimycocerosate (PDIM), a cell wall-associated lipid found only in pathogenic mycobacteria. Catalyzes the activation of long-chain fatty acids as acyl-adenylates (acyl-AMP), which are then transferred to the multifunctional polyketide synthase Mas for further chain extension. This Mycobacterium tuberculosis (strain CDC 1551 / Oshkosh) protein is Long-chain-fatty-acid--AMP ligase FadD28 (fadD28).